The following is a 635-amino-acid chain: DNA mismatch repair protein MutL (635 aa).

Residues 352–380 (KAALQRGWVPPGAGRPGEGGGRAAPPPWR) are disordered.

Belongs to the DNA mismatch repair MutL/HexB family.

Its function is as follows. This protein is involved in the repair of mismatches in DNA. It is required for dam-dependent methyl-directed DNA mismatch repair. May act as a 'molecular matchmaker', a protein that promotes the formation of a stable complex between two or more DNA-binding proteins in an ATP-dependent manner without itself being part of a final effector complex. The protein is DNA mismatch repair protein MutL of Symbiobacterium thermophilum (strain DSM 24528 / JCM 14929 / IAM 14863 / T).